Consider the following 461-residue polypeptide: tRNA modification GTPase MnmE (461 aa).

Arginine 27, glutamate 89, and arginine 128 together coordinate (6S)-5-formyl-5,6,7,8-tetrahydrofolate. One can recognise a TrmE-type G domain in the interval 224–382 (GLKTAIVGRP…LEALIKKLFF (159 aa)). Asparagine 234 provides a ligand contact to K(+). Residues 234 to 239 (NVGKSS), 253 to 259 (TDVAGTT), and 278 to 281 (DTAG) each bind GTP. Mg(2+) is bound at residue serine 238. Residues threonine 253, valine 255, and threonine 258 each contribute to the K(+) site. Threonine 259 is a Mg(2+) binding site. Position 461 (lysine 461) interacts with (6S)-5-formyl-5,6,7,8-tetrahydrofolate.

Belongs to the TRAFAC class TrmE-Era-EngA-EngB-Septin-like GTPase superfamily. TrmE GTPase family. Homodimer. Heterotetramer of two MnmE and two MnmG subunits. Requires K(+) as cofactor.

The protein localises to the cytoplasm. Functionally, exhibits a very high intrinsic GTPase hydrolysis rate. Involved in the addition of a carboxymethylaminomethyl (cmnm) group at the wobble position (U34) of certain tRNAs, forming tRNA-cmnm(5)s(2)U34. This chain is tRNA modification GTPase MnmE, found in Lactobacillus delbrueckii subsp. bulgaricus (strain ATCC BAA-365 / Lb-18).